Consider the following 678-residue polypeptide: DNA ligase (678 aa).

NAD(+) is bound by residues Asp-47 to Asp-51, Ser-96 to Leu-97, and Glu-122. Lys-124 acts as the N6-AMP-lysine intermediate in catalysis. Positions 145, 182, 300, and 324 each coordinate NAD(+). Zn(2+) contacts are provided by Cys-418, Cys-421, Cys-436, and Cys-442. The BRCT domain maps to Ala-602–Leu-678.

This sequence belongs to the NAD-dependent DNA ligase family. LigA subfamily. Requires Mg(2+) as cofactor. Mn(2+) is required as a cofactor.

The catalysed reaction is NAD(+) + (deoxyribonucleotide)n-3'-hydroxyl + 5'-phospho-(deoxyribonucleotide)m = (deoxyribonucleotide)n+m + AMP + beta-nicotinamide D-nucleotide.. In terms of biological role, DNA ligase that catalyzes the formation of phosphodiester linkages between 5'-phosphoryl and 3'-hydroxyl groups in double-stranded DNA using NAD as a coenzyme and as the energy source for the reaction. It is essential for DNA replication and repair of damaged DNA. This is DNA ligase from Francisella tularensis subsp. holarctica (strain FTNF002-00 / FTA).